The sequence spans 437 residues: Trigger factor (437 aa).

Residues 161–246 form the PPIase FKBP-type domain; sequence DDQVNIDFVG…VNSVSAPVLP (86 aa).

The protein belongs to the FKBP-type PPIase family. Tig subfamily.

It localises to the cytoplasm. It carries out the reaction [protein]-peptidylproline (omega=180) = [protein]-peptidylproline (omega=0). Functionally, involved in protein export. Acts as a chaperone by maintaining the newly synthesized protein in an open conformation. Functions as a peptidyl-prolyl cis-trans isomerase. This is Trigger factor from Pseudomonas putida (strain ATCC 700007 / DSM 6899 / JCM 31910 / BCRC 17059 / LMG 24140 / F1).